The following is a 961-amino-acid chain: DNA replication licensing factor MCM2 (961 aa).

The span at 1 to 17 shows a compositional bias: polar residues; that stretch reads MDDSENNAPSTPGSPGF. Disordered stretches follow at residues 1–81 and 120–220; these read MDDS…FNDN and AEAE…EEDE. Residues 39-78 are compositionally biased toward acidic residues; it reads SDDDDDDVVGAEEAEVDPNVLPEDDGVVAAEEEEDGEDLF. Composition is skewed to basic and acidic residues over residues 120 to 146 and 166 to 176; these read AEAELDARDVRTGAAPDRKLPRMLHDQ and PPREPRTPRSD. A compositionally biased stretch (acidic residues) spans 205–220; the sequence is QTDDDPYEDEFDEEDE. The segment at 380 to 406 adopts a C4-type zinc-finger fold; that stretch reads CSKCGTVLGPFFQNSYTEVKVGSCPEC. Residues 524–730 enclose the MCM domain; the sequence is IGERIVKSIA…FTDEMLARFV (207 aa). 574–581 serves as a coordination point for ATP; the sequence is GDPGTAKS. Positions 706–709 match the Arginine finger motif; that stretch reads SRFD.

This sequence belongs to the MCM family. In terms of assembly, component of the minichromosome maintenance (MCM) complex, a heterotetramer composed of MCM2, MCM3, MCM4, MCM5, MCM6 and MCM7.

It is found in the nucleus. The enzyme catalyses ATP + H2O = ADP + phosphate + H(+). Its function is as follows. Probable component of the MCM2-7 complex (MCM complex) that may function as a DNA helicase and which is essential to undergo a single round of replication initiation and elongation per cell cycle in eukaryotic cells. The chain is DNA replication licensing factor MCM2 from Oryza sativa subsp. indica (Rice).